The chain runs to 582 residues: Putative frv operon regulatory protein (582 aa).

Residues 20 to 39 (PGELAQQTGVSGRTILRDID) constitute a DNA-binding region (H-T-H motif). Residues 443 to 582 (RFFSAPGSFH…EAFMELLHKG (140 aa)) form the PTS EIIA type-2 domain. A Phosphohistidine; by HPr modification is found at His-505.

Could be involved in the regulation of the transcription of the FRV operon. The polypeptide is Putative frv operon regulatory protein (frvR) (Escherichia coli (strain K12)).